Here is a 140-residue protein sequence, read N- to C-terminus: Probable NADH dehydrogenase [ubiquinone] iron-sulfur protein 6, mitochondrial (140 aa).

This sequence belongs to the complex I NDUFS6 subunit family. As to quaternary structure, complex I is composed of 45 different subunits. This is a component of the iron-sulfur (IP) fragment of the enzyme.

The protein localises to the mitochondrion inner membrane. In terms of biological role, accessory subunit of the mitochondrial membrane respiratory chain NADH dehydrogenase (Complex I), that is believed not to be involved in catalysis. Complex I functions in the transfer of electrons from NADH to the respiratory chain. The immediate electron acceptor for the enzyme is believed to be ubiquinone. This is Probable NADH dehydrogenase [ubiquinone] iron-sulfur protein 6, mitochondrial (nduf-6) from Caenorhabditis elegans.